The sequence spans 127 residues: Aspartate 1-decarboxylase (127 aa).

S25 serves as the catalytic Schiff-base intermediate with substrate; via pyruvic acid. S25 carries the pyruvic acid (Ser) modification. Position 57 (T57) interacts with substrate. The active-site Proton donor is Y58. 73 to 75 (GAA) contacts substrate.

Belongs to the PanD family. As to quaternary structure, heterooctamer of four alpha and four beta subunits. Pyruvate is required as a cofactor. Is synthesized initially as an inactive proenzyme, which is activated by self-cleavage at a specific serine bond to produce a beta-subunit with a hydroxyl group at its C-terminus and an alpha-subunit with a pyruvoyl group at its N-terminus.

The protein localises to the cytoplasm. It carries out the reaction L-aspartate + H(+) = beta-alanine + CO2. It functions in the pathway cofactor biosynthesis; (R)-pantothenate biosynthesis; beta-alanine from L-aspartate: step 1/1. Functionally, catalyzes the pyruvoyl-dependent decarboxylation of aspartate to produce beta-alanine. The polypeptide is Aspartate 1-decarboxylase (Listeria welshimeri serovar 6b (strain ATCC 35897 / DSM 20650 / CCUG 15529 / CIP 8149 / NCTC 11857 / SLCC 5334 / V8)).